A 782-amino-acid chain; its full sequence is LPS-assembly protein LptD (782 aa).

Positions 1–23 (MNKKHTLISLAILTALYSQQSLA) are cleaved as a signal peptide.

Belongs to the LptD family. As to quaternary structure, component of the lipopolysaccharide transport and assembly complex. Interacts with LptE and LptA.

Its subcellular location is the cell outer membrane. Its function is as follows. Together with LptE, is involved in the assembly of lipopolysaccharide (LPS) at the surface of the outer membrane. The polypeptide is LPS-assembly protein LptD (Haemophilus influenzae (strain ATCC 51907 / DSM 11121 / KW20 / Rd)).